Consider the following 465-residue polypeptide: A-type ATP synthase subunit B (465 aa).

Belongs to the ATPase alpha/beta chains family. In terms of assembly, has multiple subunits with at least A(3), B(3), C, D, E, F, H, I and proteolipid K(x).

The protein resides in the cell membrane. Its function is as follows. Component of the A-type ATP synthase that produces ATP from ADP in the presence of a proton gradient across the membrane. The B chain is a regulatory subunit. The sequence is that of A-type ATP synthase subunit B from Sulfurisphaera tokodaii (strain DSM 16993 / JCM 10545 / NBRC 100140 / 7) (Sulfolobus tokodaii).